The primary structure comprises 487 residues: GlcNAc-binding protein A (487 aa).

Residues 1-29 (MKKLPNKSLIALALLSVSGASFGHGYVSA) form the signal peptide. One can recognise a Chitin-binding type-4 domain in the interval 30 to 201 (YENGVAEGRA…SFYNVIDVKF (172 aa)). The Chitin-binding type-3 domain occupies 438–479 (AGTKVLASDGAVYQCKEFPFSGYCTQWSPSATQFEPGKGSHW).

The protein belongs to the GbpA family.

The protein localises to the secreted. In terms of biological role, probably interacts with GlcNAc residues. May promote attachment to both epithelial cell surfaces and chitin. The polypeptide is GlcNAc-binding protein A (Vibrio campbellii (strain ATCC BAA-1116)).